A 393-amino-acid chain; its full sequence is Chorismate synthase (393 aa).

Arg-40 and Arg-46 together coordinate NADP(+). Residues 129–131 (RSS), 249–250 (QA), Gly-301, 316–320 (KPIPT), and Arg-342 contribute to the FMN site.

This sequence belongs to the chorismate synthase family. In terms of assembly, homotetramer. The cofactor is FMNH2.

It catalyses the reaction 5-O-(1-carboxyvinyl)-3-phosphoshikimate = chorismate + phosphate. It participates in metabolic intermediate biosynthesis; chorismate biosynthesis; chorismate from D-erythrose 4-phosphate and phosphoenolpyruvate: step 7/7. Its function is as follows. Catalyzes the anti-1,4-elimination of the C-3 phosphate and the C-6 proR hydrogen from 5-enolpyruvylshikimate-3-phosphate (EPSP) to yield chorismate, which is the branch point compound that serves as the starting substrate for the three terminal pathways of aromatic amino acid biosynthesis. This reaction introduces a second double bond into the aromatic ring system. In Geotalea daltonii (strain DSM 22248 / JCM 15807 / FRC-32) (Geobacter daltonii), this protein is Chorismate synthase.